The primary structure comprises 188 residues: Elongation factor P (188 aa).

Belongs to the elongation factor P family.

The protein localises to the cytoplasm. It participates in protein biosynthesis; polypeptide chain elongation. In terms of biological role, involved in peptide bond synthesis. Stimulates efficient translation and peptide-bond synthesis on native or reconstituted 70S ribosomes in vitro. Probably functions indirectly by altering the affinity of the ribosome for aminoacyl-tRNA, thus increasing their reactivity as acceptors for peptidyl transferase. This is Elongation factor P from Paramagnetospirillum magneticum (strain ATCC 700264 / AMB-1) (Magnetospirillum magneticum).